We begin with the raw amino-acid sequence, 309 residues long: Homoserine kinase (309 aa).

91–101 (PIGSGLGSSAC) provides a ligand contact to ATP.

It belongs to the GHMP kinase family. Homoserine kinase subfamily.

It is found in the cytoplasm. It carries out the reaction L-homoserine + ATP = O-phospho-L-homoserine + ADP + H(+). It participates in amino-acid biosynthesis; L-threonine biosynthesis; L-threonine from L-aspartate: step 4/5. In terms of biological role, catalyzes the ATP-dependent phosphorylation of L-homoserine to L-homoserine phosphate. In Serratia proteamaculans (strain 568), this protein is Homoserine kinase.